Here is a 432-residue protein sequence, read N- to C-terminus: MHWDLNNYYSNNMDGLISKLKLSKTESTKLKELRQIVRERTRDVFKEARAVAADVKKHTLTLEGVRLKLGQTNVRYLSTADQAEVARLIFEMDDDARNDFINLQPRFWTQGSFQYDTLNKPFQPGQEMDIDDGTYMPMTVFESEPRIGHTLLLLLVDTSLKSLEAENDGWRFEEKNTCGRIKIPHEKTHIDVPMYAIPKNQFQTKQTAADSAHILKSESIFESVALNRDSREAYLVESDKVNLALREGAKRWSISDPKIVEDWFNDSCKRIGGHVRSICRFMKAWRDAQWDVGGPSSISLMTAVVNILNREEHNDSDLAGTMKLVAKLLPDEFNRGLESPDDTDTKLLFPAEWDQNVHQKTIVETMKTLYEILVDAENANTREDALHKMNEAFGKRVTNAQLITSIAAAPAFHVSPSREPEPRKINKTMVSG.

Residue 110–115 (QGSFQY) participates in GTP binding. Residues aspartate 129 and aspartate 131 each contribute to the Mg(2+) site. Arginine 180 contacts ATP. Residue aspartate 191 participates in Mg(2+) binding. Serine 255 lines the ATP pocket. Residues lysine 283, serine 297, and aspartate 344 each coordinate GTP. Glycine 432 is covalently cross-linked (Glycyl cysteine dithioester (Gly-Cys) (interchain with C-13 in Cap2)). Glycine 432 is covalently cross-linked (Glycyl cysteine dithioester (Gly-Cys) (interchain with C-493 in Cap2)). Residue glycine 432 forms a Glycyl cysteine dithioester (Gly-Cys) (interchain with C-513 in Cap2) linkage. Glycine 432 participates in a covalent cross-link: Glycyl lysine isopeptide (Gly-Lys) (interchain with K-? in acceptor proteins).

Belongs to the CD-NTase family. A02 subfamily. In terms of assembly, a Cap2 dimer is bound on either side by a DncV monomer. Requires Mg(2+) as cofactor. Post-translationally, in bacteria expressing capV-dncV-cap2-cap3, this protein is conjugated to about 130 cellular proteins by Cap2, most of which are involved in metabolism; more conjugated protein is found in the absence of Cap3. Most conjugation occurs via an isopeptide bond with the epsilon-amine of Lys on the target protein, but Cys-conjugation also occurs, including to Cap2. Conjugation or deconjugation from cellular proteins does not change the DncV activity in vitro, but does so in vivo during infection. (Microbial infection) During phage T4 infection is conjugated to at least 2 T4 proteins (fibritin (wac) and dexA.2).

It carries out the reaction GTP + ATP = 3',3'-cGAMP + 2 diphosphate. With respect to regulation, primed for activation by Cap2 which conjugates it to cellular proteins. cGAMP production is induced in phage T4 infected cells in a manner that requires Cap2 and Cap3, as well as a C-terminal Ala or Gly residue in this protein. Functionally, cyclic nucleotide synthase (second messenger synthase) of a CBASS antivirus system. CBASS (cyclic oligonucleotide-based antiphage signaling system) provides immunity against bacteriophages. The CD-NTase protein (DncV, this protein) synthesizes cyclic nucleotides in response to infection; these serve as specific second messenger signals. The signals activate a diverse range of effectors, leading to bacterial cell death and thus abortive phage infection. A type II-A(GA) CBASS system. In terms of biological role, catalyzes the synthesis of 3',3'-cyclic GMP-AMP (cGAMP) from GTP and ATP, a second messenger in cell signal transduction. Its product controls the activity of cGAMP-activated phospholipase CapV, a patatin-like lipase that is a direct cGAMP receptor encoded in the dncV operon. Its function is as follows. Protects E.coli against phage infection. When capV and dncV are introduced in E.coli MG1655 there is 1000-fold protection against phage P1; protection against other phage (T2, T4, T5, T6 and lambda-vir) requires the 2 subsequent genes (cap2 and cap3). In another paper the capV-dncV-cap2-cap3 operon gives 10(4)-10(5)-fold protection against phages lambda, T2, T4 and T6, about 1000-fold protection against P1 and 10-fold protection against T5. The sequence is that of Cyclic GMP-AMP synthase from Escherichia coli (strain TW11681).